The primary structure comprises 1168 residues: Transcription-repair-coupling factor (1168 aa).

Residues 633–794 (DMQKSRPMDR…MLGVRDLSVI (162 aa)) enclose the Helicase ATP-binding domain. Residue 646-653 (GDVGYGKT) coordinates ATP. A DEEQ box motif is present at residues 747 to 750 (DEEQ). Residues 808–969 (VLEQNMSFIK…GFKIAMRDLN (162 aa)) form the Helicase C-terminal domain.

In the N-terminal section; belongs to the UvrB family. This sequence in the C-terminal section; belongs to the helicase family. RecG subfamily.

It localises to the cytoplasm. In terms of biological role, couples transcription and DNA repair by recognizing RNA polymerase (RNAP) stalled at DNA lesions. Mediates ATP-dependent release of RNAP and its truncated transcript from the DNA, and recruitment of nucleotide excision repair machinery to the damaged site. The chain is Transcription-repair-coupling factor from Staphylococcus aureus (strain MSSA476).